A 214-amino-acid polypeptide reads, in one-letter code: Octanoyltransferase (214 aa).

The BPL/LPL catalytic domain occupies 29–214 (SETLDEIWVL…QHLQKQLIPS (186 aa)). Substrate-binding positions include 69 to 76 (RGGEITYH), 146 to 148 (ALG), and 159 to 161 (GLA). Residue C177 is the Acyl-thioester intermediate of the active site.

This sequence belongs to the LipB family.

It is found in the cytoplasm. The catalysed reaction is octanoyl-[ACP] + L-lysyl-[protein] = N(6)-octanoyl-L-lysyl-[protein] + holo-[ACP] + H(+). Its pathway is protein modification; protein lipoylation via endogenous pathway; protein N(6)-(lipoyl)lysine from octanoyl-[acyl-carrier-protein]: step 1/2. In terms of biological role, catalyzes the transfer of endogenously produced octanoic acid from octanoyl-acyl-carrier-protein onto the lipoyl domains of lipoate-dependent enzymes. Lipoyl-ACP can also act as a substrate although octanoyl-ACP is likely to be the physiological substrate. This Polynucleobacter necessarius subsp. necessarius (strain STIR1) protein is Octanoyltransferase.